A 215-amino-acid chain; its full sequence is Probable transaldolase (215 aa).

Lysine 83 serves as the catalytic Schiff-base intermediate with substrate.

Belongs to the transaldolase family. Type 3B subfamily.

Its subcellular location is the cytoplasm. It carries out the reaction D-sedoheptulose 7-phosphate + D-glyceraldehyde 3-phosphate = D-erythrose 4-phosphate + beta-D-fructose 6-phosphate. It participates in carbohydrate degradation; pentose phosphate pathway; D-glyceraldehyde 3-phosphate and beta-D-fructose 6-phosphate from D-ribose 5-phosphate and D-xylulose 5-phosphate (non-oxidative stage): step 2/3. Its function is as follows. Transaldolase is important for the balance of metabolites in the pentose-phosphate pathway. In Bdellovibrio bacteriovorus (strain ATCC 15356 / DSM 50701 / NCIMB 9529 / HD100), this protein is Probable transaldolase.